Here is a 341-residue protein sequence, read N- to C-terminus: Eukaryotic translation initiation factor 3 subunit I (341 aa).

5 WD repeats span residues 8–49 (GHER…GTYH), 50–91 (GHQG…HTWE), 145–184 (CDESKATVAGWSYLAKYIIAGHEDGSVSQYDAKNGDQLHS), 189–228 (DMGSEIRDLQWSQDRTYFITASKDKTAKLVTARDLEVLKT), and 286–325 (GHFGPLNYVAAEPNGKGYASGGEDGYVRVHQFDKGYFDFM).

The protein belongs to the eIF-3 subunit I family. As to quaternary structure, component of the eukaryotic translation initiation factor 3 (eIF-3) complex.

It is found in the cytoplasm. Its function is as follows. Component of the eukaryotic translation initiation factor 3 (eIF-3) complex, which is involved in protein synthesis of a specialized repertoire of mRNAs and, together with other initiation factors, stimulates binding of mRNA and methionyl-tRNAi to the 40S ribosome. The eIF-3 complex specifically targets and initiates translation of a subset of mRNAs involved in cell proliferation. The polypeptide is Eukaryotic translation initiation factor 3 subunit I (Pyricularia oryzae (strain 70-15 / ATCC MYA-4617 / FGSC 8958) (Rice blast fungus)).